The chain runs to 527 residues: Putative WEB family protein At4g17210 (527 aa).

Disordered regions lie at residues 1–28 and 46–70; these read MAKI…IDTR and FSKK…TDVS. Over residues 55–68 the composition is skewed to low complexity; the sequence is SSSSSSQSQDTTTD. Coiled coils occupy residues 95–159, 202–389, and 436–513; these read AAKA…YILI, SNKI…AKHM, and KKIR…EAHS.

It belongs to the WEB family.

This chain is Putative WEB family protein At4g17210, found in Arabidopsis thaliana (Mouse-ear cress).